The sequence spans 874 residues: Tyrosine-protein kinase receptor TYRO3 (874 aa).

An N-terminal signal peptide occupies residues 1–20 (MEVSLCILLFLLHFNEGIHG). Ig-like C2-type domains lie at 21–106 (VRFT…IISS) and 117–198 (PHFG…GTVH). Residues 21–411 (VRFTQKPFHQ…QAQTQRGHMW (391 aa)) are Extracellular-facing. Cysteine 42 and cysteine 95 form a disulfide bridge. Asparagine 135, asparagine 174, asparagine 217, asparagine 270, asparagine 305, and asparagine 373 each carry an N-linked (GlcNAc...) asparagine glycan. A disulfide bond links cysteine 138 and cysteine 181. Fibronectin type-III domains are found at residues 202–297 (RPDS…TPQA) and 299–403 (PSAA…AMQA). A helical transmembrane segment spans residues 412-432 (VGLLFGLLVATMVGLLLIVLI). The Cytoplasmic portion of the chain corresponds to 433-874 (RNRGKETQFG…EEEEDVIINV (442 aa)). A Protein kinase domain is found at 497-768 (LTLGRMLGKG…QHLIDQLELL (272 aa)). Residues 503-511 (LGKGEFGSV) and lysine 529 contribute to the ATP site. Catalysis depends on aspartate 634, which acts as the Proton acceptor. A Phosphotyrosine; by autocatalysis modification is found at tyrosine 665.

Belongs to the protein kinase superfamily. Tyr protein kinase family. AXL/UFO subfamily.

Its subcellular location is the cell membrane. The catalysed reaction is L-tyrosyl-[protein] + ATP = O-phospho-L-tyrosyl-[protein] + ADP + H(+). May be involved in cell adhesion processes, particularly in the central nervous system. In Danio rerio (Zebrafish), this protein is Tyrosine-protein kinase receptor TYRO3 (tyro3).